A 768-amino-acid polypeptide reads, in one-letter code: Protein ITPRID2 (768 aa).

Disordered regions lie at residues 1–24 (MTTEDHLLRTASQHSDSSGFAEDS), 39–78 (LQAMGSSADSCDSETTVTSLGEDLATPTAQDQPYFNESEE), and 98–124 (RKSGSQDFPQCNTIENPGTKQSTCSPG). 2 stretches are compositionally biased toward polar residues: residues 39-57 (LQAMGSSADSCDSETTVTS) and 102-122 (SQDFPQCNTIENPGTKQSTCS). Phosphoserine occurs at positions 153, 177, 246, 248, 255, 268, 276, and 312. A disordered region spans residues 315-338 (SVKKEEAPQSEAPRVEECHHGRTP). Over residues 316-334 (VKKEEAPQSEAPRVEECHH) the composition is skewed to basic and acidic residues. Lysine 317 participates in a covalent cross-link: Glycyl lysine isopeptide (Lys-Gly) (interchain with G-Cter in SUMO2). 2 positions are modified to phosphoserine: serine 378 and serine 411. Positions 468–546 (QELQVMRRSL…GLEEQLRAVR (79 aa)) form a coiled coil. 6 positions are modified to phosphoserine: serine 549, serine 564, serine 569, serine 572, serine 627, and serine 643. Disordered regions lie at residues 605–647 (IPPG…VGKP) and 663–718 (ALTP…AAEE). Polar residues predominate over residues 610–627 (SSESVFSQATSESSSVCS). Threonine 665 bears the Phosphothreonine mark. Polar residues predominate over residues 667-677 (TAPSRTGSVQT). Serine 670 bears the Phosphoserine mark. Threonine 677 bears the Phosphothreonine mark. The span at 682–694 (ESSEEVDAAEEAP) shows a compositional bias: acidic residues.

The protein localises to the cytoplasm. This is Protein ITPRID2 from Pongo abelii (Sumatran orangutan).